Here is a 195-residue protein sequence, read N- to C-terminus: Segregation and condensation protein B (195 aa).

Residues 169-195 (LEDVAASQENSREAGGRGSIPGHPGEE) are disordered.

It belongs to the ScpB family. In terms of assembly, homodimer. Homodimerization may be required to stabilize the binding of ScpA to the Smc head domains. Component of a cohesin-like complex composed of ScpA, ScpB and the Smc homodimer, in which ScpA and ScpB bind to the head domain of Smc. The presence of the three proteins is required for the association of the complex with DNA.

The protein localises to the cytoplasm. Participates in chromosomal partition during cell division. May act via the formation of a condensin-like complex containing Smc and ScpA that pull DNA away from mid-cell into both cell halves. The polypeptide is Segregation and condensation protein B (Moorella thermoacetica (strain ATCC 39073 / JCM 9320)).